Reading from the N-terminus, the 248-residue chain is 3-deoxy-manno-octulosonate cytidylyltransferase (248 aa).

Belongs to the KdsB family.

The protein resides in the cytoplasm. The enzyme catalyses 3-deoxy-alpha-D-manno-oct-2-ulosonate + CTP = CMP-3-deoxy-beta-D-manno-octulosonate + diphosphate. It participates in nucleotide-sugar biosynthesis; CMP-3-deoxy-D-manno-octulosonate biosynthesis; CMP-3-deoxy-D-manno-octulosonate from 3-deoxy-D-manno-octulosonate and CTP: step 1/1. It functions in the pathway bacterial outer membrane biogenesis; lipopolysaccharide biosynthesis. In terms of biological role, activates KDO (a required 8-carbon sugar) for incorporation into bacterial lipopolysaccharide in Gram-negative bacteria. In Photobacterium profundum (strain SS9), this protein is 3-deoxy-manno-octulosonate cytidylyltransferase.